A 74-amino-acid polypeptide reads, in one-letter code: M-myrmeciitoxin-Mb1a (74 aa).

Residues 1 to 26 form the signal peptide; sequence MKLSCLLLTLAIIVVLTIVHAPNVEA. The propeptide occupies 27-50; sequence KALADPESDAVGFADAVGEADPNA. Q73 is subject to Glutamine amide.

It belongs to the formicidae venom precursor-01 superfamily. Ant pilosulin family. As to expression, expressed by the venom gland.

It localises to the secreted. In terms of biological role, shows moderate activity against E.coli and S.aureus (MIC&lt;25 uM), slight activity against B.subtilis (MIC&lt;50 uM), and no activity against L.garvieae, P.aeruginosa, C.albicans, and S.cerevisiae. Has no hemolytic nor cytolytic activity. Causes an IgE-independent histamine release. The chain is M-myrmeciitoxin-Mb1a from Myrmecia banksi (Jack jumper ant).